The primary structure comprises 106 residues: Iron-sulfur cluster assembly protein CyaY (106 aa).

Belongs to the frataxin family.

In terms of biological role, involved in iron-sulfur (Fe-S) cluster assembly. May act as a regulator of Fe-S biogenesis. The chain is Iron-sulfur cluster assembly protein CyaY from Escherichia coli O9:H4 (strain HS).